The following is a 256-amino-acid chain: Chorismate mutase (256 aa).

A Chorismate mutase domain is found at 3–255; the sequence is FTKPETVLNL…EVEYLLRRLE (253 aa). L-tyrosine-binding residues include Arg75 and Arg76. L-tryptophan-binding residues include Asn138, Asn139, Gly141, and Ser142. L-tyrosine is bound by residues Asn139, Gly141, Ser142, and Thr145.

As to quaternary structure, homodimer.

It localises to the cytoplasm. It catalyses the reaction chorismate = prephenate. Its pathway is metabolic intermediate biosynthesis; prephenate biosynthesis; prephenate from chorismate: step 1/1. With respect to regulation, each dimer has two allosteric binding sites that can bind the regulatory effectors tryptophan or tyrosine. Can bind either one tryptophan or one tyrosine, two tryptophan or two tyrosine or one tryptophan and one tyrosine, which differentially affect the catalytic activity. Activated by tryptophan and subject to feedback inhibition by tyrosine. In the presence of both tryptophan and tyrosine, the enzyme is in the activated state. Catalyzes the Claisen rearrangement of chorismate to prephenate. Acts at the first branch point in the aromatic amino acid pathway where it steers biosynthesis towards phenylalanine and tyrosine, and away from tryptophan. The protein is Chorismate mutase of Saccharomyces cerevisiae (strain ATCC 204508 / S288c) (Baker's yeast).